Here is a 209-residue protein sequence, read N- to C-terminus: Uracil phosphoribosyltransferase (209 aa).

Residues Arg79, Arg104, and 131-139 (DPMLATGGS) each bind 5-phospho-alpha-D-ribose 1-diphosphate. Residues Ile194 and 199–201 (GDA) contribute to the uracil site. Position 200 (Asp200) interacts with 5-phospho-alpha-D-ribose 1-diphosphate.

It belongs to the UPRTase family. The cofactor is Mg(2+).

It catalyses the reaction UMP + diphosphate = 5-phospho-alpha-D-ribose 1-diphosphate + uracil. It functions in the pathway pyrimidine metabolism; UMP biosynthesis via salvage pathway; UMP from uracil: step 1/1. Its activity is regulated as follows. Allosterically activated by GTP. Catalyzes the conversion of uracil and 5-phospho-alpha-D-ribose 1-diphosphate (PRPP) to UMP and diphosphate. The sequence is that of Uracil phosphoribosyltransferase from Clostridium perfringens (strain SM101 / Type A).